Here is a 498-residue protein sequence, read N- to C-terminus: UPF0371 protein cauri_2449 (498 aa).

This sequence belongs to the UPF0371 family.

The protein is UPF0371 protein cauri_2449 of Corynebacterium aurimucosum (strain ATCC 700975 / DSM 44827 / CIP 107346 / CN-1) (Corynebacterium nigricans).